A 579-amino-acid polypeptide reads, in one-letter code: UPF0324 membrane protein DVU_2133 (579 aa).

11 consecutive transmembrane segments (helical) span residues 26–45, 193–215, 225–243, 250–272, 305–327, 369–391, 401–423, 436–456, 476–495, 515–534, and 549–571; these read YWAI…LFLA, PFNI…AVGM, FLVG…LMMG, YWGI…TVGT, IGIP…TFIF, LTLA…PAFI, GGAW…AFLG, IQNV…CARV, FVLG…GSLG, LRNW…TNFR, and YVAG…FYIV.

This sequence belongs to the UPF0324 family.

Its subcellular location is the cell membrane. This is UPF0324 membrane protein DVU_2133 from Nitratidesulfovibrio vulgaris (strain ATCC 29579 / DSM 644 / CCUG 34227 / NCIMB 8303 / VKM B-1760 / Hildenborough) (Desulfovibrio vulgaris).